Consider the following 199-residue polypeptide: Peptidyl-tRNA hydrolase (199 aa).

TRNA is bound at residue Tyr15. His20 (proton acceptor) is an active-site residue. TRNA contacts are provided by Phe66, Asn68, and Asn114.

The protein belongs to the PTH family. Monomer.

Its subcellular location is the cytoplasm. The catalysed reaction is an N-acyl-L-alpha-aminoacyl-tRNA + H2O = an N-acyl-L-amino acid + a tRNA + H(+). Functionally, hydrolyzes ribosome-free peptidyl-tRNAs (with 1 or more amino acids incorporated), which drop off the ribosome during protein synthesis, or as a result of ribosome stalling. In terms of biological role, catalyzes the release of premature peptidyl moieties from peptidyl-tRNA molecules trapped in stalled 50S ribosomal subunits, and thus maintains levels of free tRNAs and 50S ribosomes. The polypeptide is Peptidyl-tRNA hydrolase (Cupriavidus pinatubonensis (strain JMP 134 / LMG 1197) (Cupriavidus necator (strain JMP 134))).